A 307-amino-acid polypeptide reads, in one-letter code: Putative S-adenosyl-L-methionine-dependent methyltransferase Mflv_5023 (307 aa).

S-adenosyl-L-methionine contacts are provided by residues Asp-133 and 162 to 163; that span reads DL. A disordered region spans residues 213–234; the sequence is SRLAVESVPSQQSADQDEMREK.

The protein belongs to the UPF0677 family.

Its function is as follows. Exhibits S-adenosyl-L-methionine-dependent methyltransferase activity. The polypeptide is Putative S-adenosyl-L-methionine-dependent methyltransferase Mflv_5023 (Mycolicibacterium gilvum (strain PYR-GCK) (Mycobacterium gilvum (strain PYR-GCK))).